The primary structure comprises 466 residues: Phosphoenolpyruvate carboxykinase (ATP) (466 aa).

Substrate-binding residues include Arg-61, Tyr-196, and Lys-202. Residues Lys-202, His-221, and 237–245 contribute to the ATP site; that span reads GLSGTGKTT. Positions 202 and 221 each coordinate Mn(2+). A Mn(2+)-binding site is contributed by Asp-258. 3 residues coordinate ATP: Glu-286, Arg-323, and Thr-448. Arg-323 contacts substrate.

Belongs to the phosphoenolpyruvate carboxykinase (ATP) family. The cofactor is Mn(2+).

It is found in the cytoplasm. It catalyses the reaction oxaloacetate + ATP = phosphoenolpyruvate + ADP + CO2. The protein operates within carbohydrate biosynthesis; gluconeogenesis. Its function is as follows. Involved in the gluconeogenesis. Catalyzes the conversion of oxaloacetate (OAA) to phosphoenolpyruvate (PEP) through direct phosphoryl transfer between the nucleoside triphosphate and OAA. In Deinococcus radiodurans (strain ATCC 13939 / DSM 20539 / JCM 16871 / CCUG 27074 / LMG 4051 / NBRC 15346 / NCIMB 9279 / VKM B-1422 / R1), this protein is Phosphoenolpyruvate carboxykinase (ATP).